A 329-amino-acid polypeptide reads, in one-letter code: Bifunctional muramidase/DL-endopeptidase CwlT (329 aa).

Residues 1–29 form the signal peptide; it reads MISKKVVLPLVFSAPFIFFFVLCIVVVMT. Positions 59-192 are muramidase; it reads RFRAVFEKYA…SYVDHVMRYV (134 aa). Residues 206 to 329 enclose the NlpC/P60 domain; it reads MDFYETVMKE…DHLVSFGRIK (124 aa). Catalysis depends on cysteine 237, which acts as the Nucleophile. Histidine 290 (proton acceptor) is an active-site residue. Residue asparagine 302 is part of the active site.

It belongs to the peptidase C40 family.

It localises to the secreted. The enzyme catalyses Hydrolysis of (1-&gt;4)-beta-linkages between N-acetylmuramic acid and N-acetyl-D-glucosamine residues in a peptidoglycan and between N-acetyl-D-glucosamine residues in chitodextrins.. In terms of biological role, exhibits both muramidase and DL-endopeptidase activities. The N-terminal region acts as a N-acetylmuramidase, which cleaves the bond between N-acetylmuramic acid and N-acetyl-D-glucosamine (MurNAc-GlcNAc) in peptidoglycan. The C-terminal region acts as a DL-endopeptidase that cleaves the bond between D-gamma-glutamate and meso-diaminopimelic acid. Cannot degrade purified B.anthracis peptidoglycan, which differ from those of B.subtilis. CwlT is required for ICEBs1 conjugation: the muramidase activity is essential, whereas the peptidase activity is partially dispensable for transfer of ICEBs1. In Bacillus subtilis (strain 168), this protein is Bifunctional muramidase/DL-endopeptidase CwlT.